The primary structure comprises 172 residues: Protein GrpE (172 aa).

The tract at residues 1-23 is disordered; it reads MNQDHPECDSEELTQNSPETDPL.

It belongs to the GrpE family. Homodimer.

The protein localises to the cytoplasm. Its function is as follows. Participates actively in the response to hyperosmotic and heat shock by preventing the aggregation of stress-denatured proteins, in association with DnaK and GrpE. It is the nucleotide exchange factor for DnaK and may function as a thermosensor. Unfolded proteins bind initially to DnaJ; upon interaction with the DnaJ-bound protein, DnaK hydrolyzes its bound ATP, resulting in the formation of a stable complex. GrpE releases ADP from DnaK; ATP binding to DnaK triggers the release of the substrate protein, thus completing the reaction cycle. Several rounds of ATP-dependent interactions between DnaJ, DnaK and GrpE are required for fully efficient folding. In Xylella fastidiosa (strain M23), this protein is Protein GrpE.